Reading from the N-terminus, the 133-residue chain is Small ribosomal subunit protein uS11 (133 aa).

Belongs to the universal ribosomal protein uS11 family. Part of the 30S ribosomal subunit. Interacts with proteins S7 and S18. Binds to IF-3.

Functionally, located on the platform of the 30S subunit, it bridges several disparate RNA helices of the 16S rRNA. Forms part of the Shine-Dalgarno cleft in the 70S ribosome. This chain is Small ribosomal subunit protein uS11, found in Chlamydia pneumoniae (Chlamydophila pneumoniae).